A 2057-amino-acid chain; its full sequence is Fer-1-like protein 5 (2057 aa).

C2 domains are found at residues 1-99, 152-265, 308-425, 1057-1188, 1213-1346, 1467-1587, and 1705-1853; these read MLRL…VLFV, PGST…TLLR, DDTD…EGVY, DTRP…MRWH, KLGE…AQDY, PKPP…AHCG, and GPPG…KQCS. 10 residues coordinate Ca(2+): D1502, D1508, D1557, F1558, D1559, S1562, D1565, D1824, S1827, and D1830. A helical membrane pass occupies residues 1962–1982; it reads LIAFMVISIIALMLFNFIYSA.

This sequence belongs to the ferlin family. As to quaternary structure, interacts (via second C2 domain) with EHD1 and EHD2. It depends on Ca(2+) as a cofactor.

The protein resides in the cell membrane. The protein localises to the membrane. In terms of biological role, plays a role in myoblast fusion; probable mediator of endocytic recycling for membrane trafficking events during myotube formation. The sequence is that of Fer-1-like protein 5 (FER1L5) from Homo sapiens (Human).